We begin with the raw amino-acid sequence, 196 residues long: Chromophore lyase CpcT/CpeT (196 aa).

It belongs to the CpcT/CpeT biliprotein lyase family.

In terms of biological role, covalently attaches a chromophore to Cys residue(s) of phycobiliproteins. The chain is Chromophore lyase CpcT/CpeT from Synechococcus sp. (strain WH8020).